The chain runs to 266 residues: MNKSRFISCVILIFALILVLFTPNVLAESQPDPTPDELHKASKFTGLMENMKVLYDDHYVSATKVKSVDKFLAHDLIYNISDKKLKNYDKVKTELLNEGLAKKYKDEVVDVYGSNYYVNCYFSSKDNVGKVTGGKTCMYGGITKHEGNHFDNGNLQNVLIRVYENKRNTISFEVQTDKKSVTAQELDIKARNFLINKKNLYEFNSSPYETGYIKFIENNGNTFWYDMMPAPGDKFDQSKYLMMYNDNKTVDSKSVKIEVHLTTKNG.

Residues 1 to 27 (MNKSRFISCVILIFALILVLFTPNVLA) form the signal peptide. The cysteines at positions 120 and 137 are disulfide-linked.

It belongs to the staphylococcal/streptococcal toxin family. Interacts with host MHC class II molecules composed of alpha/HLA-DRA and beta/HLA-DRB1 chains.

Its subcellular location is the secreted. Functionally, staphylococcal enterotoxin that activates the host immune system by binding as unprocessed molecules to major histocompatibility (MHC) complex class II and T-cell receptor (TCR) molecules. In turn, this ternary complex activates a large number of T-lymphocytes initiating a systemic release of pro-inflammatory cytokines. Inhibits SEC1-mediated T-cell activation in the absence of MHC class II by competing with SEC1 for binding to the host TCR. Also causes the intoxication staphylococcal food poisoning syndrome. This chain is Enterotoxin type C-1 (entC1), found in Staphylococcus aureus.